A 310-amino-acid polypeptide reads, in one-letter code: tRNA dimethylallyltransferase (310 aa).

14-21 (GPTASGKT) is a binding site for ATP. Position 16–21 (16–21 (TASGKT)) interacts with substrate. 3 interaction with substrate tRNA regions span residues 39-42 (DSAL), 163-167 (QRLSR), and 244-249 (RCVGYR).

This sequence belongs to the IPP transferase family. As to quaternary structure, monomer. Mg(2+) is required as a cofactor.

The catalysed reaction is adenosine(37) in tRNA + dimethylallyl diphosphate = N(6)-dimethylallyladenosine(37) in tRNA + diphosphate. Catalyzes the transfer of a dimethylallyl group onto the adenine at position 37 in tRNAs that read codons beginning with uridine, leading to the formation of N6-(dimethylallyl)adenosine (i(6)A). The sequence is that of tRNA dimethylallyltransferase from Tolumonas auensis (strain DSM 9187 / NBRC 110442 / TA 4).